Reading from the N-terminus, the 327-residue chain is MPADQRPLAIALMGPTASGKTALALEAAERWNGEIVSVDSALVYRGLEIGAAKPDAAMRAAVPHHLLDLRDPWQVYSAAEFAGDARQAIAQIVARGKLPILAGGTGLYFRALLEGLSHLPEADRAARASIAAEAEQIGWAGLHSELARVDPVAAARIHATDPQRIQRALEVYRISGRPISYWQALPPGLRLPVRVLKVVLAPRERAVLHGRIERRLDAMLAQGFLAEVEQVRALPQMRAVAVPLDLPAVRAVGYRQAWEYLDGAGSLAEFRDKAIQATRQLAKRQLTWLRGELDARWFDPELDRHQLERALVGFLGDRSAVRQASGV.

ATP is bound at residue 14–21 (GPTASGKT). A substrate-binding site is contributed by 16 to 21 (TASGKT). Interaction with substrate tRNA regions lie at residues 39-42 (DSAL) and 163-167 (QRIQR).

This sequence belongs to the IPP transferase family. In terms of assembly, monomer. It depends on Mg(2+) as a cofactor.

It catalyses the reaction adenosine(37) in tRNA + dimethylallyl diphosphate = N(6)-dimethylallyladenosine(37) in tRNA + diphosphate. In terms of biological role, catalyzes the transfer of a dimethylallyl group onto the adenine at position 37 in tRNAs that read codons beginning with uridine, leading to the formation of N6-(dimethylallyl)adenosine (i(6)A). This is tRNA dimethylallyltransferase from Xanthomonas oryzae pv. oryzae (strain MAFF 311018).